Here is a 287-residue protein sequence, read N- to C-terminus: PAK4-inhibitor INKA1 (287 aa).

Disordered stretches follow at residues 22–59 (GRDTGSPSMPGPLQPTSQTGPDVQPSHQLRASGALEED) and 138–157 (SRAPVASVPPVHHPRPKSTP). Over residues 35–50 (QPTSQTGPDVQPSHQL) the composition is skewed to polar residues. The span at 138-147 (SRAPVASVPP) shows a compositional bias: low complexity. 2 inka box regions span residues 168-205 (EAEDWTAALLNRGRSRQPLVLGDNCFADLVHNWMELPE) and 261-287 (PADVSRFAALMSCRSRQPIICNDVSYL).

It belongs to the INKA family. In terms of assembly, interacts with PAK4.

It is found in the nucleus. It localises to the cytoplasm. Functionally, inhibitor of the serine/threonine-protein kinase PAK4. Acts by binding PAK4 in a substrate-like manner, inhibiting the protein kinase activity. The protein is PAK4-inhibitor INKA1 of Homo sapiens (Human).